A 279-amino-acid chain; its full sequence is Phosphatidylglycerol--prolipoprotein diacylglyceryl transferase (279 aa).

Helical transmembrane passes span 22–42 (WYGI…QAAL), 52–72 (LIDI…IYFV), and 89–109 (IWHG…SGII). Position 137 (R137) interacts with a 1,2-diacyl-sn-glycero-3-phospho-(1'-sn-glycerol). Transmembrane regions (helical) follow at residues 203–223 (LGET…FVEA) and 235–255 (IRVA…FVIY).

This sequence belongs to the Lgt family.

The protein resides in the cell membrane. It catalyses the reaction L-cysteinyl-[prolipoprotein] + a 1,2-diacyl-sn-glycero-3-phospho-(1'-sn-glycerol) = an S-1,2-diacyl-sn-glyceryl-L-cysteinyl-[prolipoprotein] + sn-glycerol 1-phosphate + H(+). Its pathway is protein modification; lipoprotein biosynthesis (diacylglyceryl transfer). Functionally, catalyzes the transfer of the diacylglyceryl group from phosphatidylglycerol to the sulfhydryl group of the N-terminal cysteine of a prolipoprotein, the first step in the formation of mature lipoproteins. The polypeptide is Phosphatidylglycerol--prolipoprotein diacylglyceryl transferase (Staphylococcus epidermidis (strain ATCC 35984 / DSM 28319 / BCRC 17069 / CCUG 31568 / BM 3577 / RP62A)).